The primary structure comprises 89 residues: Small ribosomal subunit protein uS15 (89 aa).

This sequence belongs to the universal ribosomal protein uS15 family. In terms of assembly, part of the 30S ribosomal subunit. Forms a bridge to the 50S subunit in the 70S ribosome, contacting the 23S rRNA.

One of the primary rRNA binding proteins, it binds directly to 16S rRNA where it helps nucleate assembly of the platform of the 30S subunit by binding and bridging several RNA helices of the 16S rRNA. In terms of biological role, forms an intersubunit bridge (bridge B4) with the 23S rRNA of the 50S subunit in the ribosome. The protein is Small ribosomal subunit protein uS15 of Sulfurovum sp. (strain NBC37-1).